The following is a 560-amino-acid chain: Eukaryotic translation initiation factor 3 subunit D-1 (560 aa).

The tract at residues 98-166 (VQKPPHQRGR…RGPPPKMRES (69 aa)) is disordered. Over residues 100–121 (KPPHQRGRFRNMRNSRSGRGRN) the composition is skewed to basic residues. Threonine 128 carries the post-translational modification Phosphothreonine. Residues 147–156 (GRGMGKKFGH) show a composition bias toward basic residues. The interval 291–305 (EFDLLTVNESSVEPP) is RNA gate.

This sequence belongs to the eIF-3 subunit D family. In terms of assembly, component of the eukaryotic translation initiation factor 3 (eIF-3) complex. The eIF-3 complex interacts with pix.

Its subcellular location is the cytoplasm. In terms of biological role, mRNA cap-binding component of the eukaryotic translation initiation factor 3 (eIF-3) complex, which is involved in protein synthesis of a specialized repertoire of mRNAs and, together with other initiation factors, stimulates binding of mRNA and methionyl-tRNAi to the 40S ribosome. The eIF-3 complex specifically targets and initiates translation of a subset of mRNAs involved in cell proliferation. In the eIF-3 complex, eif3d specifically recognizes and binds the 7-methylguanosine cap of a subset of mRNAs. In Drosophila melanogaster (Fruit fly), this protein is Eukaryotic translation initiation factor 3 subunit D-1.